Here is a 1148-residue protein sequence, read N- to C-terminus: Envelopment polyprotein (1148 aa).

An N-terminal signal peptide occupies residues 1 to 23 (MGELSPVCLCLLLQGLLLCNTGA). Over 24-496 (ARNLNELKME…PGLHGWATML (473 aa)) the chain is Lumenal. 6 disulfide bridges follow: Cys-34–Cys-159, Cys-68–Cys-165, Cys-117–Cys-136, Cys-141–Cys-146, Cys-183–Cys-193, and Cys-218–Cys-257. The N-linked (GlcNAc...) asparagine; by host glycan is linked to Asn-142. Residue Asn-357 is glycosylated (N-linked (GlcNAc...) asparagine; by host). Cystine bridges form between Cys-386-Cys-445, Cys-390-Cys-399, Cys-415-Cys-434, and Cys-462-Cys-485. N-linked (GlcNAc...) asparagine; by host glycosylation is present at Asn-409. Residues 497–517 (LLLTFCFGWVLIPTITMILLK) form a helical membrane-spanning segment. The Cytoplasmic portion of the chain corresponds to 518–637 (ILIAFAYLCS…LSLFRYRSRF (120 aa)). The interval 526 to 543 (CSKYNTDSKFRILIEKVK) is binding to the ribonucleoprotein. CCHC-type zinc fingers lie at residues 555-575 (CEVC…RKSC) and 580-601 (CPYC…FKVC). Binding to the ribonucleoprotein stretches follow at residues 598–615 (FKVC…RKSL), 602–613 (KLTSRFQENLRK), and 621–635 (MQGC…RYRS). An ITAM domain is found at 621–644 (MQGCYRTLSLFRYRSRFFVGLVWC). The YxxL motif lies at 625–628 (YRTL). The helical transmembrane segment at 638–658 (FVGLVWCVLLVLELIVWAASA) threads the bilayer. Topologically, residues 659-1115 (ETQNLNAGWT…WILGVLNGNW (457 aa)) are lumenal. Cystine bridges form between Cys-745/Cys-780, Cys-749/Cys-787, Cys-761/Cys-894, Cys-775/Cys-905, Cys-790/Cys-913, Cys-816/Cys-825, Cys-833/Cys-842, and Cys-873/Cys-877. Residues 767–787 (YEYETGWGCNPPDCPGVGTGC) form a fusion loop region. N-linked (GlcNAc...) asparagine; by host glycosylation is present at Asn-937. 5 disulfides stabilise this stretch: Cys-979/Cys-1009, Cys-1002/Cys-1054, Cys-1019/Cys-1024, Cys-1055/Cys-1060, and Cys-1094/Cys-1098. A helical membrane pass occupies residues 1116–1136 (MVVAVLVVLLILSILLFTLCC). 2 binding to the ribonucleoprotein regions span residues 1131–1143 (LFTL…PSYR) and 1131–1148 (LFTL…EHKP). Topologically, residues 1137–1148 (PRRPSYRKEHKP) are cytoplasmic.

Belongs to the hantavirus envelope glycoprotein family. As to quaternary structure, homodimer. Homotetramer; forms heterotetrameric Gn-Gc spikes in the pre-fusion conformation. Interacts (via C-terminus) with the nucleoprotein. Interacts with host TUFM; this interaction contributes to the virus-induced degradation of mitochondria by autophagy, which leads to degradation of host MAVS and inhibition of type I interferon (IFN) responses. Interacts with host MAP1LC3B; this interaction contributes to the virus-induced degradation of mitochondria by autophagy, which leads to degradation of host MAVS and inhibition of type I interferon (IFN) responses. In terms of assembly, homodimer. Homotetramer; forms heterotetrameric Gn-Gc spikes in the pre-fusion conformation. Homotrimer; forms homotrimer in the post-fusion conformation at acidic pH. Interacts (via C-terminus) with the nucleoprotein. In terms of processing, envelope polyprotein precursor is quickly cleaved in vivo just after synthesis, presumably by host signal peptidase.

It is found in the virion membrane. It localises to the host cell surface. The protein resides in the host Golgi apparatus membrane. Its subcellular location is the host endoplasmic reticulum membrane. The protein localises to the host mitochondrion. Its function is as follows. Forms homotetramers with glycoprotein C at the surface of the virion. Attaches the virion to host cell receptors including integrin ITGAV/ITGB3. This attachment induces virion internalization predominantly through clathrin-dependent endocytosis. Mediates the assembly and budding of infectious virus particles through its interaction with the nucleocapsid protein and the viral genome. May dysregulate normal immune and endothelial cell responses through an ITAM motif. Translocates to mitochondria, binds to host TUFM and recruits MAP1LC3B. These interactions induce mitochondrial autophagy and therefore destruction of host MAVS leading to inhibition of type I interferon (IFN) responses. Concomitant breakdown of glycoprotein N is apparently prevented by the nucleoprotein that may inhibit Gn-stimulated autophagosome-lysosome fusion. Interacts with the viral genomic RNA. In terms of biological role, forms homotetramers with glycoprotein N at the surface of the virion. Attaches the virion to host cell receptors including integrin ITGAV/ITGB3. This attachment induces virion internalization predominantly through clathrin-dependent endocytosis. Class II fusion protein that promotes fusion of viral membrane with host endosomal membrane after endocytosis of the virion. The sequence is that of Envelopment polyprotein (GP) from Homo sapiens (Human).